Reading from the N-terminus, the 230-residue chain is Complex I assembly factor TMEM126B, mitochondrial (230 aa).

Helical transmembrane passes span 70 to 92, 107 to 126, 139 to 161, and 196 to 218; these read LNIH…ANLV, YASL…KLFV, SCVL…ALAF, and AMAI…HYNI.

The protein belongs to the TMEM126 family. As to quaternary structure, part of the mitochondrial complex I assembly/MCIA complex that comprises at least the core subunits TMEM126B, NDUFAF1, ECSIT and ACAD9 and complement subunits such as COA1 and TMEM186. Associates with the intermediate 370 kDa subcomplex of incompletely assembled complex I. Interacts with TMEM70.

The protein resides in the mitochondrion membrane. In terms of biological role, as part of the MCIA complex, involved in the assembly of the mitochondrial complex I. Participates in constructing the membrane arm of complex I. The chain is Complex I assembly factor TMEM126B, mitochondrial from Mus musculus (Mouse).